Consider the following 348-residue polypeptide: Ferredoxin--NADP reductase 1 (348 aa).

FAD-binding residues include E36, K44, Y48, I88, P123, D285, and S326. A disordered region spans residues 329 to 348; sequence EKFKKKNEQLKQEKQAQLMN.

It belongs to the ferredoxin--NADP reductase type 2 family. Homodimer. Requires FAD as cofactor.

The enzyme catalyses 2 reduced [2Fe-2S]-[ferredoxin] + NADP(+) + H(+) = 2 oxidized [2Fe-2S]-[ferredoxin] + NADPH. The sequence is that of Ferredoxin--NADP reductase 1 from Shouchella clausii (strain KSM-K16) (Alkalihalobacillus clausii).